A 224-amino-acid chain; its full sequence is uncharacterized protein (224 aa).

The first 23 residues, 1–23 (MKKLLAAGIIGLLTVSIASPSFA), serve as a signal peptide directing secretion. The VWFA domain occupies 31–224 (NVAVLFDGSG…WEKEAQKFTE (194 aa)).

The protein to B.subtilis YwmC.

This is an uncharacterized protein from Bacillus subtilis (strain 168).